Reading from the N-terminus, the 32-residue chain is Calcitonin-2 (32 aa).

C1 and C7 are joined by a disulfide. Proline amide is present on P32.

The protein belongs to the calcitonin family.

It localises to the secreted. Causes a rapid but short-lived drop in the level of calcium and phosphate in blood by promoting the incorporation of those ions in the bones. In Oncorhynchus gorbuscha (Pink salmon), this protein is Calcitonin-2.